The following is a 189-amino-acid chain: Glucose-6-phosphate isomerase (189 aa).

Fe cation is bound by residues His88, His90, Glu97, and His136.

This sequence belongs to the archaeal-type GPI family. As to quaternary structure, homodimer. Requires Fe cation as cofactor.

Its subcellular location is the cytoplasm. The enzyme catalyses alpha-D-glucose 6-phosphate = beta-D-fructose 6-phosphate. The protein operates within carbohydrate degradation; glycolysis; D-glyceraldehyde 3-phosphate and glycerone phosphate from D-glucose: step 2/4. The protein is Glucose-6-phosphate isomerase (pgiA) of Pyrococcus abyssi (strain GE5 / Orsay).